Here is a 458-residue protein sequence, read N- to C-terminus: MSTGTVVQVIGAVVDVEFPQDAVPQVYDALEIKSEDLVLEVQQQLGGGVVRTIAMGSSDGLRRGLEVVNSGSPISVPVGEKTLGRIMNVLGQPVDEAGEIGEEERYVIHREAPSYEDQSNTTELLETGIKVIDLVCPFAKGGKVGLFGGAGVGKTVNMMELINNIAKAHSGLSVFAGVGERTREGNDFYYEMEDSGVLDKVAMVYGQMNEPPGNRLRVALTGLTMAEKFRDEGKDVLFFVDNIYRYTLAGTEVSALLGRMPSAVGYQPTLAEEMGVLQERITSTKTGSITSVQAVYVPADDLTDPSPATTFAHLDATVVLSRNIASMGIYPAVDPLDSTSRQLDPLVVGQEHYDVANGVQTVLQRYKELKDIIAILGMDELSDEDKTTVSRARKIEKYLSQPFFVAEVFTGSPGKYVSLKDTIRGFKGILEGEYDNLPEQAFYMVGSIDEVVEKANKK.

148 to 155 (GGAGVGKT) is an ATP binding site.

This sequence belongs to the ATPase alpha/beta chains family. F-type ATPases have 2 components, CF(1) - the catalytic core - and CF(0) - the membrane proton channel. CF(1) has five subunits: alpha(3), beta(3), gamma(1), delta(1), epsilon(1). CF(0) has three main subunits: a(1), b(2) and c(9-12). The alpha and beta chains form an alternating ring which encloses part of the gamma chain. CF(1) is attached to CF(0) by a central stalk formed by the gamma and epsilon chains, while a peripheral stalk is formed by the delta and b chains.

Its subcellular location is the cell inner membrane. The catalysed reaction is ATP + H2O + 4 H(+)(in) = ADP + phosphate + 5 H(+)(out). In terms of biological role, produces ATP from ADP in the presence of a proton gradient across the membrane. The catalytic sites are hosted primarily by the beta subunits. The polypeptide is ATP synthase subunit beta (Shewanella woodyi (strain ATCC 51908 / MS32)).